Reading from the N-terminus, the 114-residue chain is rRNA-processing protein cgrA (114 aa).

Residues 1–96 (MSASESAPSA…YDKMAEKMHR (96 aa)) are disordered. Positions 40–101 (AKRLEARKHQ…EKMHRKRVER (62 aa)) form a coiled coil. Residues 41 to 93 (KRLEARKHQEAVKEHERELKEEKEAERQAHIQRIKDRRAAKEEKERYDKMAEK) are compositionally biased toward basic and acidic residues.

Belongs to the CGR1 family.

The protein resides in the nucleus. The protein localises to the nucleolus. Involved in nucleolar integrity and required for processing of the pre-rRNA for the 60S ribosome subunit. The chain is rRNA-processing protein cgrA (cgrA) from Aspergillus terreus (strain NIH 2624 / FGSC A1156).